The sequence spans 419 residues: 3-isopropylmalate dehydratase large subunit (419 aa).

The [4Fe-4S] cluster site is built by cysteine 302, cysteine 362, and cysteine 365.

This sequence belongs to the aconitase/IPM isomerase family. LeuC type 2 subfamily. As to quaternary structure, heterodimer of LeuC and LeuD. [4Fe-4S] cluster is required as a cofactor.

The catalysed reaction is (2R,3S)-3-isopropylmalate = (2S)-2-isopropylmalate. It participates in amino-acid biosynthesis; L-leucine biosynthesis; L-leucine from 3-methyl-2-oxobutanoate: step 2/4. In terms of biological role, catalyzes the isomerization between 2-isopropylmalate and 3-isopropylmalate, via the formation of 2-isopropylmaleate. The protein is 3-isopropylmalate dehydratase large subunit of Sulfurimonas denitrificans (strain ATCC 33889 / DSM 1251) (Thiomicrospira denitrificans (strain ATCC 33889 / DSM 1251)).